The following is a 106-amino-acid chain: Iron-sulfur cluster assembly protein CyaY (106 aa).

This sequence belongs to the frataxin family.

Functionally, involved in iron-sulfur (Fe-S) cluster assembly. May act as a regulator of Fe-S biogenesis. The chain is Iron-sulfur cluster assembly protein CyaY from Salmonella agona (strain SL483).